The following is a 170-amino-acid chain: Lipoprotein signal peptidase (170 aa).

Transmembrane regions (helical) follow at residues 9 to 29, 72 to 92, and 94 to 114; these read FNIF…KYLV, IFFL…SLKE, and NCIA…NVID. Residues Asp-124 and Asp-146 contribute to the active site. The chain crosses the membrane as a helical span at residues 143-163; it reads NFADSYVVIGMILFLVYDFFI.

The protein belongs to the peptidase A8 family.

It is found in the cell inner membrane. It catalyses the reaction Release of signal peptides from bacterial membrane prolipoproteins. Hydrolyzes -Xaa-Yaa-Zaa-|-(S,diacylglyceryl)Cys-, in which Xaa is hydrophobic (preferably Leu), and Yaa (Ala or Ser) and Zaa (Gly or Ala) have small, neutral side chains.. The protein operates within protein modification; lipoprotein biosynthesis (signal peptide cleavage). In terms of biological role, this protein specifically catalyzes the removal of signal peptides from prolipoproteins. The chain is Lipoprotein signal peptidase from Borreliella burgdorferi (strain ATCC 35210 / DSM 4680 / CIP 102532 / B31) (Borrelia burgdorferi).